Reading from the N-terminus, the 429-residue chain is MRVVVLGSGVVGVTSAYYLARAGHEVTVIDREAGPALETSFANAGQISPGYASPWAAPGVPLKAVKWMFQKHAPLAIRLDGTQFQLQWMWQMLQNCTSSRYAVNKGRMVRLAEYSRDCLQALRAETGIQYEGRTGGTLQVFRTQQQFEGAAKDIAVLREASVPYELLSPAELAQAEPALAAVSHKLTGGLRLPGDETGDCQMFTTRLAALAEQLGVKFRYNTPIDALAMAGDRIAGVKCGEELVRADSFVVALGSYSTQFLSGLVKIPVYPLKGYSITAPIVNEASAPVSTVLDETYKIAITRFDDRIRVGGMAEIVGFDKSLREARRETLELCVNDLFPGGGDTSKATFWSGLRPMTPDGTPIVGRTPVANLFLNTGHGTLGWTMSCGSGQLLADVMSGKQPAIKADDLSVHRYLGETRGAHRPAYAA.

Position 3-17 (3-17 (VVVLGSGVVGVTSAY)) interacts with FAD.

Belongs to the DadA oxidoreductase family. FAD is required as a cofactor.

The catalysed reaction is a D-alpha-amino acid + A + H2O = a 2-oxocarboxylate + AH2 + NH4(+). The protein operates within amino-acid degradation; D-alanine degradation; NH(3) and pyruvate from D-alanine: step 1/1. Its function is as follows. Oxidative deamination of D-amino acids. This Paraburkholderia xenovorans (strain LB400) protein is D-amino acid dehydrogenase.